An 833-amino-acid polypeptide reads, in one-letter code: Leucine--tRNA ligase (833 aa).

A 'HIGH' region motif is present at residues 41–52 (PYPSGAGLHVGH). The 'KMSKS' region motif lies at 610–614 (KMSKS). Lysine 613 provides a ligand contact to ATP.

This sequence belongs to the class-I aminoacyl-tRNA synthetase family.

The protein localises to the cytoplasm. It carries out the reaction tRNA(Leu) + L-leucine + ATP = L-leucyl-tRNA(Leu) + AMP + diphosphate. The sequence is that of Leucine--tRNA ligase from Streptococcus pyogenes serotype M5 (strain Manfredo).